Reading from the N-terminus, the 246-residue chain is Metallo-beta-lactamase type 2 (246 aa).

Positions 1–20 are cleaved as a signal peptide; the sequence is MKKLFVLCVCFFCSITAAGA. Residues histidine 95, histidine 97, aspartate 99, histidine 157, and cysteine 176 each coordinate Zn(2+). A beta-lactam is bound at residue aspartate 99. Lysine 179 and asparagine 185 together coordinate a beta-lactam. Histidine 215 contacts Zn(2+).

Belongs to the metallo-beta-lactamase superfamily. Class-B beta-lactamase family. Monomer. Zn(2+) serves as cofactor.

It is found in the periplasm. The enzyme catalyses a beta-lactam + H2O = a substituted beta-amino acid. In terms of biological role, confers resistance to the different beta-lactam antibiotics (penicillin, cephalosporin and carbapenem) via the hydrolysis of the beta-lactam ring. Exhibits higher catalytic efficiency toward ticarcillin and piperacillin than blaIMP-1. Exhibits catalytic activity for carbapenem compounds, but has a preference for imipenem and ertapenem over meropenem. Has high efficiency for the hydrolysis of cefuroxime. Exhibits hydrolysis of all cephalosporins tested. Exhibits no hydrolysis of temocillin, the 6-alpha-methoxy semisynthetic derivative of ticarcillin. This Pseudomonas aeruginosa protein is Metallo-beta-lactamase type 2.